Here is a 507-residue protein sequence, read N- to C-terminus: Sperm-associated antigen 6 (507 aa).

ARM repeat units lie at residues 31-70 (PQNI…RLAN), 73-112 (DDLA…AVGK), 115-154 (PQLA…YIAR), 157-196 (TELS…DISK), 199-238 (PELA…QIAK), 241-280 (VDLA…EIAK), 325-365 (ENLA…QLGR), and 402-441 (KAIK…KVLP).

As to quaternary structure, interacts with SPAG16 and SPAG17. As to expression, highly expressed in testis. Not detected in prostate, ovary, spleen, thymus, small intestine, colon and peripheral blood leukocytes.

The protein localises to the cytoplasm. It localises to the cytoskeleton. The protein resides in the cell projection. It is found in the cilium. Its subcellular location is the flagellum. The protein localises to the cilium axoneme. Its function is as follows. Important for structural integrity of the central apparatus in the sperm tail and for flagellar motility. This is Sperm-associated antigen 6 (Spag6) from Mus musculus (Mouse).